The chain runs to 1345 residues: Membrane-anchored lipid-binding protein LAM4 (1345 aa).

Over 1–1197 the chain is Cytoplasmic; that stretch reads MTRDSKKKHH…NFSSEIFMNK (1197 aa). Disordered stretches follow at residues 51–80, 115–134, 139–164, 190–302, 356–397, 425–447, and 489–531; these read RVGGNPDIPSLLKPETFTESPAKGSQKAAA, SLKGRFQDGNSNSNSVPSLS, EKEKLQSGKREGSSNQAEEKTPDGHD, DADN…SLDD, LPEA…KPRR, SFNSSNGLTNNDPEYEDREPREM, and STII…NGRQ. Thr-66 carries the post-translational modification Phosphothreonine. Low complexity predominate over residues 216-228; the sequence is SENSTNNKNTSST. A compositionally biased stretch (polar residues) spans 246–271; it reads SKSSTPSNQQLNTTEAGSKSKPSSLS. A compositionally biased stretch (low complexity) spans 283–294; it reads HSNSHSSSNAIS. Over residues 425–436 the composition is skewed to polar residues; sequence SFNSSNGLTNND. The span at 498–516 shows a compositional bias: low complexity; sequence SNGRPSSGLRRSSSKSFSS. A GRAM domain is found at 549-616; the sequence is EFHAIFKDSG…FKTIVQIEKR (68 aa). A compositionally biased stretch (low complexity) spans 665 to 677; it reads SNSNNTNSSSNSI. Positions 665–722 are disordered; that stretch reads SNSNNTNSSSNSISDDENDDYDDDYDDYGDDDDDLYDNSNNISDSTDMTSSVSIGKPE. The span at 678–700 shows a compositional bias: acidic residues; the sequence is SDDENDDYDDDYDDYGDDDDDLY. Position 747 is a phosphoserine (Ser-747). 2 VASt domains span residues 758-930 and 967-1139; these read NEKL…TRSA and DDSI…SRAK. The disordered stretch occupies residues 930 to 963; sequence ATKRKRSSKENTVTVSTLPKMEPSSHAPTEPDIQ. A compositionally biased stretch (basic residues) spans 1141–1158; that stretch reads KKPVKKVMKSHDKHRPFH. Residues 1141–1172 form a disordered region; sequence KKPVKKVMKSHDKHRPFHSKVEQKSSESRKSD. The span at 1159 to 1172 shows a compositional bias: basic and acidic residues; it reads SKVEQKSSESRKSD. The chain crosses the membrane as a helical span at residues 1198–1218; the sequence is LLSPQKLFLILGLTIMLFWSP. Over 1219-1345 the chain is Lumenal; that stretch reads RLHVFQEKNN…NIERDANDLS (127 aa).

Belongs to the YSP2 family.

It is found in the endoplasmic reticulum membrane. Its function is as follows. May be involved in sterol transfer between intracellular membranes. This is Membrane-anchored lipid-binding protein LAM4 from Saccharomyces cerevisiae (strain ATCC 204508 / S288c) (Baker's yeast).